The primary structure comprises 425 residues: tRNA(Met) cytidine acetate ligase (425 aa).

ATP-binding positions include 7-20, glycine 102, asparagine 162, and 187-188; these read VVEYNPFHFGHLHH and RI.

It belongs to the TmcAL family.

It localises to the cytoplasm. The catalysed reaction is cytidine(34) in elongator tRNA(Met) + acetate + ATP = N(4)-acetylcytidine(34) in elongator tRNA(Met) + AMP + diphosphate. Catalyzes the formation of N(4)-acetylcytidine (ac(4)C) at the wobble position of elongator tRNA(Met), using acetate and ATP as substrates. First activates an acetate ion to form acetyladenylate (Ac-AMP) and then transfers the acetyl group to tRNA to form ac(4)C34. This chain is tRNA(Met) cytidine acetate ligase, found in Fervidobacterium nodosum (strain ATCC 35602 / DSM 5306 / Rt17-B1).